A 251-amino-acid chain; its full sequence is MKYVRCVLLTGALFNIAAGLKCADSKVLSRYKVSQHAAKGKFTESTPPSETTDFWWINLCEEHSEPVPDKCKDDAMFCHRQQVKLDDGKEYVTQVFDVPRNQEVDVEELRDGFQVSFTGKWGERERKVKVRYTCADDKAEDEVSAEGAFGAHTTPVEVALRGPSGCIQATEKSSGIGGWITWLVIYAVLLTLIYLLAKSYMSVGHGSMQDFREEFVERSTNLVSSLPEFAKEVMGKVVGGGPSSRGGYSAV.

Residues 1-19 (MKYVRCVLLTGALFNIAAG) form the signal peptide. The region spanning 20–168 (LKCADSKVLS…ALRGPSGCIQ (149 aa)) is the MRH domain. The Lumenal segment spans residues 20–175 (LKCADSKVLS…CIQATEKSSG (156 aa)). Cystine bridges form between C22–C60, C71–C78, and C134–C166. Residues 176–196 (IGGWITWLVIYAVLLTLIYLL) traverse the membrane as a helical segment. At 197-251 (AKSYMSVGHGSMQDFREEFVERSTNLVSSLPEFAKEVMGKVVGGGPSSRGGYSAV) the chain is on the cytoplasmic side.

The protein belongs to the ATG27 family.

It is found in the cytoplasmic vesicle membrane. The protein localises to the golgi apparatus membrane. It localises to the mitochondrion membrane. The protein resides in the preautophagosomal structure membrane. Functionally, effector of VPS34 phosphatidylinositol 3-phosphate kinase signaling. Regulates the cytoplasm to vacuole transport (Cvt) vesicle formation. Plays a role in ATG protein retrieval from the pre-autophagosomal structure (PAS) and is especially required for autophagy-dependent cycling of ATG9. In Eremothecium gossypii (strain ATCC 10895 / CBS 109.51 / FGSC 9923 / NRRL Y-1056) (Yeast), this protein is Autophagy-related protein 27 (ATG27).